The sequence spans 162 residues: 2-C-methyl-D-erythritol 2,4-cyclodiphosphate synthase (162 aa).

2 residues coordinate a divalent metal cation: Asp-9 and His-11. 4-CDP-2-C-methyl-D-erythritol 2-phosphate contacts are provided by residues 9-11 and 35-36; these read DVH and HS. Residue His-43 participates in a divalent metal cation binding. 4-CDP-2-C-methyl-D-erythritol 2-phosphate is bound by residues 57–59, 62–66, 133–136, Phe-140, and Arg-143; these read DIG, FPDTD, and TTTE.

It belongs to the IspF family. Homotrimer. The cofactor is a divalent metal cation.

The catalysed reaction is 4-CDP-2-C-methyl-D-erythritol 2-phosphate = 2-C-methyl-D-erythritol 2,4-cyclic diphosphate + CMP. It participates in isoprenoid biosynthesis; isopentenyl diphosphate biosynthesis via DXP pathway; isopentenyl diphosphate from 1-deoxy-D-xylulose 5-phosphate: step 4/6. Functionally, involved in the biosynthesis of isopentenyl diphosphate (IPP) and dimethylallyl diphosphate (DMAPP), two major building blocks of isoprenoid compounds. Catalyzes the conversion of 4-diphosphocytidyl-2-C-methyl-D-erythritol 2-phosphate (CDP-ME2P) to 2-C-methyl-D-erythritol 2,4-cyclodiphosphate (ME-CPP) with a corresponding release of cytidine 5-monophosphate (CMP). The sequence is that of 2-C-methyl-D-erythritol 2,4-cyclodiphosphate synthase from Histophilus somni (strain 2336) (Haemophilus somnus).